Reading from the N-terminus, the 1084-residue chain is Putative tRNA-specific 2-thiouridylase (1084 aa).

3 helical membrane-spanning segments follow: residues 1–21 (MLIFFFFFFFFKYIYNIFILT), 32–52 (FIISFIFSTLMFFYFCTFYVI), and 309–329 (IITIDAYSNNLILYCFLYLIL). Catalysis depends on C538, which acts as the Nucleophile. C538 and C715 are joined by a disulfide. The active-site Cysteine persulfide intermediate is C715.

Belongs to the MnmA/TRMU family.

Its subcellular location is the plastid. The protein localises to the apicoplast. It is found in the membrane. It carries out the reaction S-sulfanyl-L-cysteinyl-[protein] + uridine(34) in tRNA + AH2 + ATP = 2-thiouridine(34) in tRNA + L-cysteinyl-[protein] + A + AMP + diphosphate + H(+). In terms of biological role, catalyzes the 2-thiolation of uridine at the wobble position (U34) of tRNA, leading to the formation of s(2)U34. Required for apicoplast maintenance. In Plasmodium falciparum (isolate 3D7), this protein is Putative tRNA-specific 2-thiouridylase.